The following is a 687-amino-acid chain: Adhesion G-protein coupled receptor G1 (687 aa).

Residues 1–25 (MTAQSLLQMTLFLLSLLFLVQGAHG) form the signal peptide. 26–33 (RGHREDFR) provides a ligand contact to heparin. Over 26–402 (RGHREDFRFC…VEVDAVHKHY (377 aa)) the chain is Extracellular. Intrachain disulfides connect cysteine 35/cysteine 91 and cysteine 121/cysteine 177. Asparagine 39, asparagine 148, and asparagine 171 each carry an N-linked (GlcNAc...) asparagine glycan. Residue 190–200 (LKHPQKASRRP) coordinates heparin. A GAIN-B domain is found at 224–395 (DTVSFEEDRI…AVLMVSSVEV (172 aa)). 4 N-linked (GlcNAc...) asparagine glycosylation sites follow: asparagine 234, asparagine 303, asparagine 324, and asparagine 341. 2 cysteine pairs are disulfide-bonded: cysteine 346-cysteine 377 and cysteine 366-cysteine 379. Residues 346 to 395 (CVFWVEDPTLSSPGHWSSAGCETVRRETQTSCFCNHLTYFAVLMVSSVEV) form a GPS region. The interval 384–397 (YFAVLMVSSVEVDA) is stachel. Residues 403-423 (LSLLSYVGCVISALACVVTIA) form a helical membrane-spanning segment. Residues 424-442 (AYLCSRRKPRDYTIKVHMN) are Cytoplasmic-facing. The helical transmembrane segment at 443–463 (LLLAVFLLDMSFLLSEPVALT) threads the bilayer. Over 464–470 (GSEAGCR) the chain is Extracellular. A helical membrane pass occupies residues 471–491 (AGAIFLHFSLLACLSWMGLEG). Residues 492 to 512 (YNLYRLVVEVFGTYVPGYLLK) are Cytoplasmic-facing. A helical transmembrane segment spans residues 513-533 (LSAMGWGFPIFLVTLVALVDV). The Extracellular portion of the chain corresponds to 534 to 570 (DNYGPIILAVHRTPESVIYPSMCWIRDSLVSYVTNLG). A helical membrane pass occupies residues 571 to 591 (LFSLVFLFNMAMLGTMVVQIL). Topologically, residues 592–603 (RLRPHTQKWSHV) are cytoplasmic. The helical transmembrane segment at 604–624 (LTLLGLSLVLGLPWALIFFSF) threads the bilayer. The Extracellular segment spans residues 625–630 (ASGTFQ). A helical membrane pass occupies residues 631–651 (LVVLYLFSIITSFQGFLIFIW). Topologically, residues 652–687 (YWSMRLQARGGPSPLKSNSDSARLPISSGSTSSSRI) are cytoplasmic. Residues 664 to 687 (SPLKSNSDSARLPISSGSTSSSRI) form a disordered region. The span at 678–687 (SSGSTSSSRI) shows a compositional bias: low complexity.

The protein belongs to the G-protein coupled receptor 2 family. LN-TM7 subfamily. As to quaternary structure, heterodimer of 2 chains generated by proteolytic processing; the large extracellular N-terminal fragment (ADGRG1 NT) and the membrane-bound C-terminal fragment (ADGRG1-CT) predominantly remain associated and non-covalently linked. ADGRG1 NT self-associates in a trans-trans manner; the homophilic interaction enhances receptor signaling. Interacts with TGM2. Interacts with heparin; leading to the reduction of ADGRG1 shedding. Interacts with COL3A1. Part of a GPCR-tetraspanin complex at least consisting of ADGRG1, CD81, eventually CD9, and GNA11 in which CD81 is enhancing the association of ADGRG1 with GNA11. Post-translationally, autoproteolytically cleaved into 2 fragments; the large extracellular N-terminal fragment (ADGRG1 NT) and the membrane-bound C-terminal fragment (ADGRG1 CT) predominantly remain associated and non-covalently linked. Shedding to yield the secreted ADGRG1 N-terminal fragment seems to involve metalloprotease(s). Ubiquitinated. Undergoes polyubiquitination upon activation.

Its subcellular location is the cell membrane. The protein resides in the secreted. The protein localises to the membrane raft. With respect to regulation, forms a heterodimer of 2 chains generated by proteolytic processing that remain associated through non-covalent interactions mediated by the GAIN-B domain. In the inactivated receptor, the Stachel sequence (also named stalk) is embedded in the GAIN-B domain, where it adopts a beta-strand conformation. On activation, the Stachel moves into the 7 transmembrane region and adopts a twisted hook-shaped configuration that forms contacts within the receptor, leading to coupling of a G-alpha protein, which activates signaling. The cleaved GAIN-B and N-terminal domains can then dissociate from the rest of the receptor. Functionally, adhesion G-protein coupled receptor (aGPCR) for steroid hormone 17alpha-hydroxypregnenolone (17-OH), which is involved in cell adhesion and cell-cell interactions. Ligand binding causes a conformation change that triggers signaling via guanine nucleotide-binding proteins (G proteins) and modulates the activity of downstream effectors, such as RhoA pathway. ADGRG1 is coupled to G(12) and/or G(13) G proteins (GNA12 and GNA13, respectively) and mediates the activation Rho small GTPases. Acts as a potent suppressor of ferroptosis: binding to 17-OH-binding initiates signaling that down-regulates CD36 and alleviates ferroptosis-induced liver injury. Ligand-binding also induces cell adhesion activity via association with proteins such as collagen III/COL3A1 and TGM2. Mediates cell matrix adhesion in developing neurons and hematopoietic stem cells. Involved in cortical development, specifically in maintenance of the pial basement membrane integrity and in cortical lamination: association with COL3A1 in the developing brain inhibits neuronal migration via activation of the RhoA pathway. Together with TGM2, acts as a regulator of myelination and myelin repair in oligodendrocyte precursor cells. Acts as a hemostatic sensor of shear force: G protein-coupled receptor signaling is activated in response to shear force in platelets, promoting G(13) G protein signaling, and platelet shape change and aggregation in a COL3A1-dependent manner. Acts as an inhibitor of VEGFA production thereby inhibiting angiogenesis through a signaling pathway mediated by PRKCA. Plays a role in the maintenance of hematopoietic stem cells in bone marrow niche. Plays an essential role in testis development. The protein is Adhesion G-protein coupled receptor G1 (ADGRG1) of Pongo pygmaeus (Bornean orangutan).